The sequence spans 356 residues: sn-glycerol-3-phosphate import ATP-binding protein UgpC (356 aa).

In terms of domain architecture, ABC transporter spans 4 to 235 (LKLQAVTKSW…PASLFVASFI (232 aa)). 37-44 (GPSGCGKS) contacts ATP.

This sequence belongs to the ABC transporter superfamily. sn-glycerol-3-phosphate importer (TC 3.A.1.1.3) family. The complex is composed of two ATP-binding proteins (UgpC), two transmembrane proteins (UgpA and UgpE) and a solute-binding protein (UgpB).

The protein localises to the cell inner membrane. The catalysed reaction is sn-glycerol 3-phosphate(out) + ATP + H2O = sn-glycerol 3-phosphate(in) + ADP + phosphate + H(+). Part of the ABC transporter complex UgpBAEC involved in sn-glycerol-3-phosphate (G3P) import. Responsible for energy coupling to the transport system. The polypeptide is sn-glycerol-3-phosphate import ATP-binding protein UgpC (Escherichia coli O6:K15:H31 (strain 536 / UPEC)).